The primary structure comprises 720 residues: MAEEEEVEEGRSSSSAILDLPEPLLLHILSFLTDVRSRHRAALACGRMRAAERATRSELSLRGDPRSPGFLFLSHAFRFPALEHLDLSLVSPWGHPLLSSVPPCGGGGGGAPSASSSSGMNVYHPEAISEQNAFIAARLAGCFPAVTSLAVYCRDPTTLANLTPHWQASLRRVKLVRWHQRPPTLPDGADLEPLLETCAALRELDLSEFYCWTEDVVRALTTHPSATAALTHLDLGLAAATDGFKSSELGPIAASCPNLRKLVAPCLFNPRFSDCVGDDALLSLATSCPRLTVLRLSEPFEAAANIQREEAAITVAGLVAFFAALPALEDFTMDLQHNVLEAAPAMEALARRCPRIKFLTLGSFQGLCKASWLHLDGVAVCGGLESLYMKNCQDLTDASLAAIGRGCRRLAKFGIHGCDLVTSAGIRRLAFTLRPTLKEVTVLHCRLLHTAECLTALSPIRDRIESLEINCVWNTTEQPCSVANGTTTECDPEDDELGEVYESAAKKCRYMEFDDLGSWEMLRSLSLWFSAGQLLSPLISAGLDSCPVLEEISIKVEGDCRTCPRPAPRTIFGLSDLAGFPVLAKMKLDLSEAVGYALTAPTGQMDLSLWERFYLHGIESLQTLYELDYWPPQDKDVHHRSLTLPAVGLIQRCVGLRKLFIHGTTHEHFMTFFLSIPNLRDMQLREDYYPAPENDLMFTEMRAESWLRFEVQLNSRQIDD.

An F-box domain is found at 14–60 (SSAILDLPEPLLLHILSFLTDVRSRHRAALACGRMRAAERATRSELS). 18 LRR repeats span residues 71–134 (LFLS…QNAF), 135–158 (IAAR…DPTT), 159–189 (LANL…PDGA), 190–218 (DLEP…DVVR), 219–247 (ALTT…FKSS), 248–279 (ELGP…VGDD), 280–316 (ALLS…ITVA), 317–344 (GLVA…EAAP), 345–372 (AMEA…KASW), 373–398 (LHLD…LTDA), 399–435 (SLAA…TLRP), 436–452 (TLKE…HTAE), 453–510 (CLTA…KCRY), 511–537 (MEFD…LLSP), 538–571 (LISA…PRTI), 572–606 (FGLS…GQMD), 607–644 (LSLW…SLTL), and 645–720 (PAVG…QIDD).

Associates to a SCF (SKP1-CUL1-F-box protein) E3 ubiquitin-protein ligase complex. Interacts with D14 in a strigolactone-dependent manner. Interacts with SKP1, SKP5 and SKP20. Expressed in leaves. Expressed in roots, culms, leaf blades, leaf sheaths, shoot bases and panicles.

It is found in the nucleus. Involved in strigolactone (SL) signaling. Required for responses to SLs and the establishment of arbuscular mycorrhiza symbiosis in rice. Strigolactone-dependent association of D3 with D14 and D53 (a repressor of SL signaling) triggers D53 ubiquitination and degradation. Controls tillering by suppressing axillary bud activity. Tiller is a specialized grain-bearing branch that is formed on the unelongated basal internode and grows independently of the mother stem (culm) by means of its own adventitious roots. The chain is F-box/LRR-repeat MAX2 homolog from Oryza sativa subsp. japonica (Rice).